The primary structure comprises 259 residues: Eukaryotic translation initiation factor 3 subunit G-2 (259 aa).

Residues 179–257 enclose the RRM domain; it reads SAVRISNLSE…LILSVEWSKP (79 aa).

This sequence belongs to the eIF-3 subunit G family. Component of the eukaryotic translation initiation factor 3 (eIF-3) complex. The eIF-3 complex interacts with pix.

The protein resides in the cytoplasm. RNA-binding component of the eukaryotic translation initiation factor 3 (eIF-3) complex, which is involved in protein synthesis of a specialized repertoire of mRNAs and, together with other initiation factors, stimulates binding of mRNA and methionyl-tRNAi to the 40S ribosome. The eIF-3 complex specifically targets and initiates translation of a subset of mRNAs involved in cell proliferation. This subunit can bind 18S rRNA. In Drosophila mojavensis (Fruit fly), this protein is Eukaryotic translation initiation factor 3 subunit G-2.